The sequence spans 794 residues: MRVSLSSLQRFFSSPLSIKQIIEACDHIGIETEIETLLSSSFSSIITAKIIQTLPHPNADKLVVATLFDGKQEHQVVCGAPNCRPDIIVPLALPGAKLHDHEGNPYTIKKSKLRGIESQGMCCGADELGFSHLQKTERGLFEFPANTPLGESACALLADTWIEFSLTPNLGHCASLLGLAREIAHVTHVDLILPQEFSFSPLEIITKDSPSHDTSICPFFCCVKISGVCAETSPQELQQALSQFKQKSINTIVDITNYIMLAMGQPLHVYDAKTVDIDSLHAEKAQEQHGLKLLNNEEVLIPQGTAIICDKNHTVGLAGVMGSGDSSFNETTTDIILEAAYFLPKAIRASQMRIPLHSEAAYRFTRGTDPDHVLPSLYAAIHYIQKLFPKAKVAPIHVLGSIPPSPTLTLRTEMVERVLGVPLSHSQVHEELASLGFTVTPQDQGSLSVQVPAYRHDIREEIDLVEEMCRTQPWKIEKKKAPATYSPLYAFKREIVDFLAQSGLQQFFTCDLLDMETAALHRQETDYIALQGSKHATVLRDSLLPGLLKSTATNLNRQAPYVHAFELGTIYTKKNAQYQETQSLGIILSGEAEELSWVFHERVLSFYSIKGWLERLFRHFYISSKTYTIRPSEHPSFHPYQQADLYLHKHLLGRFGTLHPQLCKKAHIKHPVFFAELSVDSLLHTQKKAIARYQPYPIYPSSFRDITLTVDESVPADALRKKLLSFPSKWLENVSIISIYQNKNPTAQNKNVSLRLVFQNKERTLSNQEIEEEHERLLAMLNEQLDDTKGTIDS.

Residues 39-154 (SSSFSSIITA…ANTPLGESAC (116 aa)) enclose the tRNA-binding domain. Residues 403 to 481 (PPSPTLTLRT…QPWKIEKKKA (79 aa)) form the B5 domain. Mg(2+) is bound by residues D457, D463, E466, and E467. The FDX-ACB domain maps to 697–793 (PIYPSSFRDI…QLDDTKGTID (97 aa)).

Belongs to the phenylalanyl-tRNA synthetase beta subunit family. Type 1 subfamily. Tetramer of two alpha and two beta subunits. It depends on Mg(2+) as a cofactor.

The protein resides in the cytoplasm. The catalysed reaction is tRNA(Phe) + L-phenylalanine + ATP = L-phenylalanyl-tRNA(Phe) + AMP + diphosphate + H(+). In Chlamydia abortus (strain DSM 27085 / S26/3) (Chlamydophila abortus), this protein is Phenylalanine--tRNA ligase beta subunit.